The following is a 129-amino-acid chain: uncharacterized protein (129 aa).

A run of 2 helical transmembrane segments spans residues 4-24 and 37-57; these read FKFLKCVYLCFMVFVRLILII and VISLLFIILTFLLILGCDLSI.

It to B.burgdorferi BBF20.

The protein resides in the cell membrane. This is an uncharacterized protein from Borreliella burgdorferi (strain ATCC 35210 / DSM 4680 / CIP 102532 / B31) (Borrelia burgdorferi).